The sequence spans 920 residues: 2-oxoglutarate dehydrogenase E1 component (920 aa).

This sequence belongs to the alpha-ketoglutarate dehydrogenase family. In terms of assembly, homodimer. Part of the 2-oxoglutarate dehydrogenase (OGDH) complex composed of E1 (2-oxoglutarate dehydrogenase), E2 (dihydrolipoamide succinyltransferase) and E3 (dihydrolipoamide dehydrogenase); the complex contains multiple copies of the three enzymatic components (E1, E2 and E3). Thiamine diphosphate is required as a cofactor.

The catalysed reaction is N(6)-[(R)-lipoyl]-L-lysyl-[protein] + 2-oxoglutarate + H(+) = N(6)-[(R)-S(8)-succinyldihydrolipoyl]-L-lysyl-[protein] + CO2. E1 component of the 2-oxoglutarate dehydrogenase (OGDH) complex which catalyzes the decarboxylation of 2-oxoglutarate, the first step in the conversion of 2-oxoglutarate to succinyl-CoA and CO(2). This chain is 2-oxoglutarate dehydrogenase E1 component, found in Leptospira interrogans serogroup Icterohaemorrhagiae serovar copenhageni (strain Fiocruz L1-130).